The chain runs to 324 residues: Lipoyl synthase (324 aa).

Residues Cys71, Cys76, Cys82, Cys97, Cys101, Cys104, and Ser311 each coordinate [4Fe-4S] cluster. The Radical SAM core domain occupies 83 to 300 (FGHGTATFLI…GDKAREMGFT (218 aa)).

This sequence belongs to the radical SAM superfamily. Lipoyl synthase family. It depends on [4Fe-4S] cluster as a cofactor.

It is found in the cytoplasm. The enzyme catalyses [[Fe-S] cluster scaffold protein carrying a second [4Fe-4S](2+) cluster] + N(6)-octanoyl-L-lysyl-[protein] + 2 oxidized [2Fe-2S]-[ferredoxin] + 2 S-adenosyl-L-methionine + 4 H(+) = [[Fe-S] cluster scaffold protein] + N(6)-[(R)-dihydrolipoyl]-L-lysyl-[protein] + 4 Fe(3+) + 2 hydrogen sulfide + 2 5'-deoxyadenosine + 2 L-methionine + 2 reduced [2Fe-2S]-[ferredoxin]. Its pathway is protein modification; protein lipoylation via endogenous pathway; protein N(6)-(lipoyl)lysine from octanoyl-[acyl-carrier-protein]: step 2/2. Functionally, catalyzes the radical-mediated insertion of two sulfur atoms into the C-6 and C-8 positions of the octanoyl moiety bound to the lipoyl domains of lipoate-dependent enzymes, thereby converting the octanoylated domains into lipoylated derivatives. The chain is Lipoyl synthase from Nitrosococcus oceani (strain ATCC 19707 / BCRC 17464 / JCM 30415 / NCIMB 11848 / C-107).